Here is a 229-residue protein sequence, read N- to C-terminus: Protein OPG034 (229 aa).

It belongs to the orthopoxvirus OPG034 family.

This is Protein OPG034 (OPG034) from Vaccinia virus (strain Western Reserve) (VACV).